The chain runs to 961 residues: Leucine-rich repeat-containing protein egg-6 (961 aa).

The signal sequence occupies residues 1-18 (MRWLTLIAVAHLIAFLSS). Residues 19–854 (AEITCPRIPE…EQNERHRNIR (836 aa)) lie on the Extracellular side of the membrane. LRR repeat units follow at residues 60 to 78 (IDEL…SLPF), 79 to 101 (NGLR…AWRH), 103 to 124 (EATI…VFGN), 125 to 148 (LSTL…AFNG), 150 to 172 (SALT…SLDA), 174 to 197 (KASL…ILRN), 199 to 222 (ANLM…LMNL), 223 to 245 (PFLR…AFMN), 247 to 269 (PQLQ…RLQG), 270 to 294 (FKNL…DLPN), 305 to 316 (ITKIETLAFSNN), 317 to 339 (PNLQ…SFES), 340 to 363 (LDKL…MFDG), 364 to 387 (MKNL…SFAQ), 388 to 411 (LAHL…TFDK), 413 to 435 (SKLF…VFKK), and 437 to 455 (ISNI…SFNE). Residues 855–875 (IITAIALAFVGAVTVVVIIFF) traverse the membrane as a helical segment. The Cytoplasmic portion of the chain corresponds to 876–961 (VNYTKKQRRL…PQAVSHRSRH (86 aa)). Residues 890–943 (VYRSSPSSSGSSGQNAANESGRSSAAPSPIRPPLMNIPKTPNNRTMESTFGQPQ) form a disordered region. A compositionally biased stretch (low complexity) spans 893-902 (SSPSSSGSSG). Polar residues predominate over residues 928–943 (KTPNNRTMESTFGQPQ).

In L1 larvae, expressed in a subset of epithelial cells including epidermal, vulval and rectal cells and the excretory duct and pore. Also detected in some neurons. Absent from internal epithelia such as the gut and pharyngeal tubes.

It localises to the apical cell membrane. Required for apical extracellular matrix organization and epithelial junction maintenance. The protein is Leucine-rich repeat-containing protein egg-6 of Caenorhabditis elegans.